The sequence spans 618 residues: uncharacterized protein (618 aa).

Residues 1–45 form a disordered region; that stretch reads MSSKSASKLKREAKKAERLAAKGESVKPSKKNGTKNGKDKEVDGV. 2 stretches are compositionally biased toward basic and acidic residues: residues 14–27 and 36–45; these read KKAE…ESVK and NGKDKEVDGV. 2 positions are modified to phosphoserine: serine 50 and serine 53. Threonine 54 carries the post-translational modification Phosphothreonine. Residues serine 55 and serine 64 each carry the phosphoserine modification. 2 consecutive ABC transporter domains span residues 76–325 and 388–609; these read IKID…LKQQ and IAFN…QSRD. Residues 108–115 and 423–430 contribute to the ATP site; these read GDNGSGKS and GKNGTGKS.

This sequence belongs to the ABC transporter superfamily.

It is found in the cytoplasm. This is an uncharacterized protein from Schizosaccharomyces pombe (strain 972 / ATCC 24843) (Fission yeast).